The chain runs to 328 residues: Phenylalanine--tRNA ligase alpha subunit (328 aa).

Glu-245 contributes to the Mg(2+) binding site.

This sequence belongs to the class-II aminoacyl-tRNA synthetase family. Phe-tRNA synthetase alpha subunit type 1 subfamily. Tetramer of two alpha and two beta subunits. Mg(2+) serves as cofactor.

It is found in the cytoplasm. The enzyme catalyses tRNA(Phe) + L-phenylalanine + ATP = L-phenylalanyl-tRNA(Phe) + AMP + diphosphate + H(+). The chain is Phenylalanine--tRNA ligase alpha subunit from Helicobacter pylori (strain P12).